Reading from the N-terminus, the 478-residue chain is ATP synthase subunit beta (478 aa).

An ATP-binding site is contributed by 155–162 (GGAGVGKT).

The protein belongs to the ATPase alpha/beta chains family. F-type ATPases have 2 components, CF(1) - the catalytic core - and CF(0) - the membrane proton channel. CF(1) has five subunits: alpha(3), beta(3), gamma(1), delta(1), epsilon(1). CF(0) has three main subunits: a(1), b(2) and c(9-12). The alpha and beta chains form an alternating ring which encloses part of the gamma chain. CF(1) is attached to CF(0) by a central stalk formed by the gamma and epsilon chains, while a peripheral stalk is formed by the delta and b chains.

Its subcellular location is the cell inner membrane. The catalysed reaction is ATP + H2O + 4 H(+)(in) = ADP + phosphate + 5 H(+)(out). Its function is as follows. Produces ATP from ADP in the presence of a proton gradient across the membrane. The catalytic sites are hosted primarily by the beta subunits. This Fuscovulum blasticum (Rhodobacter blasticus) protein is ATP synthase subunit beta.